The primary structure comprises 350 residues: Protein RecA (350 aa).

80–87 serves as a coordination point for ATP; sequence GPESSGKT.

Belongs to the RecA family.

It is found in the cytoplasm. Its function is as follows. Can catalyze the hydrolysis of ATP in the presence of single-stranded DNA, the ATP-dependent uptake of single-stranded DNA by duplex DNA, and the ATP-dependent hybridization of homologous single-stranded DNAs. It interacts with LexA causing its activation and leading to its autocatalytic cleavage. The chain is Protein RecA from Chlorobium limicola (strain DSM 245 / NBRC 103803 / 6330).